Here is a 360-residue protein sequence, read N- to C-terminus: F-box protein SKP2A (360 aa).

Positions 25 to 71 (IKEWKDIPVELLMRILSLVDDRNVIVASGVCTGWRDAISFGLTRLRL) constitute an F-box domain. Residues 127 to 128 (SL), 149 to 152 (NLSG), 175 to 178 (NLCG), and N202 contribute to the (indol-3-yl)acetate site.

Part of a SCF (ASK-cullin-F-box) protein ligase complex. Interacts with CUL1 (RUB1-modified and non-modified isoforms), SKP1A, SKP1B and ASK18. Recruit DPB and phosphorylated E2FC. Interacts with auxin. Auxin controls the interaction with DPB. In terms of processing, polyubiquitinated and subsequently targeted to proteasome. Auxin promotes this ubiquitination-mediated degradation. Expressed in embryo, seedlings, hypocotyl, roots, leaves and flowers.

The protein localises to the nucleus. The protein operates within protein modification; protein ubiquitination. In terms of biological role, component of SCF(SKP2A) E3 ubiquitin ligase complexes, which mediate the ubiquitination and subsequent proteasomal degradation of target proteins (including cell cycle repressors). Acts as an auxin receptor; one active auxin is indole-3-acetate. Regulates the stability of the transcription factors E2FC and DPB, repressors of cell proliferation. Confers increase tolerance to osmotic stress by promoting cell division, especially in meristems. Promotes the formation of lateral root primordia. This Arabidopsis thaliana (Mouse-ear cress) protein is F-box protein SKP2A (SKP2A).